The primary structure comprises 1120 residues: MTTQQEEQRSDTKNSKSESPSEVLVDTLDSKSNGSSDDDNIGQSEELSDKEIYTVEDRPPEYWAQRKKKFVLDVDPKYAKQKDKSDTYKRFKYLLGVTDLFRHFIGIKAKHDKNIQKLLKQLDSDANKLSKSHSTVSSSSRHHRKTEKEEDAELMADEEEEIVDTYQEDIFVSESPSFVKSGKLRDYQVQGLNWLISLHENKLSGILADEMGLGKTLQTISFLGYLRYVKQIEGPFLIIVPKSTLDNWRREFLKWTPNVNVLVLHGDKDTRADIVRNIILEARFDVLITSYEMVIREKNALKRLAWQYIVIDEAHRIKNEQSALSQIIRLFYSKNRLLITGTPLQNNLHELWALLNFLLPDIFGDSELFDEWFEQNNSEQDQEIVIQQLHSVLNPFLLRRVKADVEKSLLPKIETNVYVGMTDMQIQWYKSLLEKDIDAVNGAVGKREGKTRLLNIVMQLRKCCNHPYLFEGAEPGPPYTTDEHLIFNSGKMIILDKLLKRLKEKGSRVLIFSQMSRLLDILEDYCYFRDFEYCRIDGSTSHEERIEAIDEYNKPNSEKFVFLLTTRAGGLGINLVTADTVILFDSDWNPQADLQAMDRAHRIGQKKQVHVYRFVTENAIEEKVIERAAQKLRLDQLVIQQGTGKKTASLGNSKDDLLDMIQFGAKNMFEKKASKVTVDADIDDILKKGEQKTQELNAKYQSLGLDDLQKFNGIENQSAYEWNGKSFQKKSNDKVVEWINPSRRERRREQTTYSVDDYYKEIIGGGSKSASKQTPQPKAPRAPKVIHGQDFQFFPKELDALQEKEQLYFKKKVNYKVTSYDITGDIRNEGSDAEEEEGEYKNAANTEGHKGHEELKRRIEEEQEKINSAPDFTQEDELRKQELISKAFTNWNKRDFMAFINACAKYGRDDMENIKKSIDSKTPEEVEVYAKIFWERLKEINGWEKYLHNVELGEKKNEKLKFQETLLRQKIEQCKHPLHELIIQYPPNNARRTYNTLEDKFLLLAVNKYGLRADKLYEKLKQEIMMSDLFTFDWFIKTRTVHELSKRVHTLLTLIVREYEQPDANKKKRSRTSATREDTPLSQNESTRASTVPNLPTTMVTNQKDTNDHVDKRTKIDQEA.

Residues 1 to 16 show a composition bias toward basic and acidic residues; it reads MTTQQEEQRSDTKNSK. 2 disordered regions span residues 1–58 and 129–153; these read MTTQ…VEDR and LSKSHSTVSSSSRHHRKTEKEEDAE. Phosphoserine is present on residues S17 and S19. The span at 47 to 58 shows a compositional bias: basic and acidic residues; it reads LSDKEIYTVEDR. In terms of domain architecture, Helicase ATP-binding spans 196 to 361; it reads ISLHENKLSG…WALLNFLLPD (166 aa). 209-216 contacts ATP; sequence DEMGLGKT. Positions 312 to 315 match the DEAH box motif; that stretch reads DEAH. The region spanning 494-645 is the Helicase C-terminal domain; the sequence is ILDKLLKRLK…QLVIQQGTGK (152 aa). 2 disordered regions span residues 764–783 and 828–853; these read GGGSKSASKQTPQPKAPRAP and NEGSDAEEEEGEYKNAANTEGHKGHE. Phosphoserine is present on S831. One can recognise an SANT domain in the interval 886-938; that stretch reads KAFTNWNKRDFMAFINACAKYGRDDMENIKKSIDSKTPEEVEVYAKIFWERLK. The segment at 1062 to 1120 is disordered; the sequence is PDANKKKRSRTSATREDTPLSQNESTRASTVPNLPTTMVTNQKDTNDHVDKRTKIDQEA. The residue at position 1079 (T1079) is a Phosphothreonine. Polar residues predominate over residues 1080 to 1104; sequence PLSQNESTRASTVPNLPTTMVTNQK. S1082 carries the phosphoserine modification. Positions 1105–1120 are enriched in basic and acidic residues; that stretch reads DTNDHVDKRTKIDQEA.

Belongs to the SNF2/RAD54 helicase family. ISWI subfamily. As to quaternary structure, component of the ISW2 complex, which at least consists of ISW2, ITC1, DLS1 and DPB4. May form a stable subcomplex with ITC1.

It is found in the nucleus. In terms of biological role, catalytic component of the ISW2 complex, which acts in remodeling the chromatin by catalyzing an ATP-dependent alteration in the structure of nucleosomal DNA. The ISW2 complex is involved in coordinating transcriptional repression and in inheritance of telomeric silencing. It is involved in repression of MAT a-specific genes, INO1, and early meiotic genes during mitotic growth dependent upon transcription factor UME6 and in a parallel pathway to the RPD3-SIN3 histone deacetylase complex. The chain is ISWI chromatin-remodeling complex ATPase ISW2 (ISW2) from Saccharomyces cerevisiae (strain ATCC 204508 / S288c) (Baker's yeast).